The following is a 179-amino-acid chain: Alpha-S2-casein-like A (179 aa).

Residues 1–15 (MKFFIFTCLVAAALA) form the signal peptide. 2 positions are modified to phosphoserine: Ser24 and Ser25. Residues 44–121 (FQTPQDSASS…NAIYDVPSQE (78 aa)) are disordered. Residues 63-74 (ISEKIEQSEEQK) are compositionally biased toward basic and acidic residues. The span at 93-110 (PQICTPYQQQSSVNQRPQ) shows a compositional bias: polar residues.

It belongs to the alpha-casein family. In terms of tissue distribution, mammary gland specific. Secreted in milk.

The protein resides in the secreted. Its function is as follows. Important role in the capacity of milk to transport calcium phosphate. This Rattus norvegicus (Rat) protein is Alpha-S2-casein-like A (Csn1s2a).